The chain runs to 293 residues: SAGA-associated factor 29 (293 aa).

A coiled-coil region spans residues 3-86 (LVSADSRIAE…LRKALDKIAE (84 aa)). The 142-residue stretch at 152–293 (GDYVAKPGDK…VVACKEPKKK (142 aa)) folds into the SGF29 C-terminal domain. 2 histone H3K4me3 N-terminus binding regions span residues 194–196 (DID) and 240–243 (QTTC). The interval 264 to 266 (FED) is histone H3K4me3 binding. Lys288 is subject to N6-acetyllysine.

The protein belongs to the SGF29 family. As to quaternary structure, interacts with dimethylated and trimethylated 'Lys-4' of histone H3 (H3K4me2 and H3K4me3), with a preference for the trimethylated form (H3K4me3). Component of some SAGA-type complexes. Component of the ADA2A-containing complex (ATAC), composed of KAT14, KAT2A, TADA2L, TADA3L, ZZ3, MBIP, WDR5, YEATS2, CCDC101 and DR1. Interacts with (methylated) CGAS. Interacts with TADA3L, GCN5L2, SUPT3H and MYC.

It localises to the nucleus. In terms of biological role, chromatin reader component of some histone acetyltransferase (HAT) SAGA-type complexes like the TFTC-HAT, ATAC or STAGA complexes. SGF29 specifically recognizes and binds methylated 'Lys-4' of histone H3 (H3K4me), with a preference for trimethylated form (H3K4me3). In the SAGA-type complexes, SGF29 is required to recruit complexes to H3K4me. Involved in the response to endoplasmic reticulum (ER) stress by recruiting the SAGA complex to H3K4me, thereby promoting histone H3 acetylation and cell survival. Also binds non-histone proteins that are methylated on Lys residues: specifically recognizes and binds CGAS monomethylated on 'Lys-491'. In Mus musculus (Mouse), this protein is SAGA-associated factor 29.